The sequence spans 326 residues: tRNA dimethylallyltransferase 2 (326 aa).

ATP is bound at residue 14 to 21 (GPTASGKT). Substrate is bound at residue 16–21 (TASGKT). The interaction with substrate tRNA stretch occupies residues 39–42 (DSMQ).

It belongs to the IPP transferase family. Monomer. Mg(2+) is required as a cofactor.

The catalysed reaction is adenosine(37) in tRNA + dimethylallyl diphosphate = N(6)-dimethylallyladenosine(37) in tRNA + diphosphate. Catalyzes the transfer of a dimethylallyl group onto the adenine at position 37 in tRNAs that read codons beginning with uridine, leading to the formation of N6-(dimethylallyl)adenosine (i(6)A). This Geotalea daltonii (strain DSM 22248 / JCM 15807 / FRC-32) (Geobacter daltonii) protein is tRNA dimethylallyltransferase 2.